Consider the following 101-residue polypeptide: Unclassified hydrophobin dewD (101 aa).

An N-terminal signal peptide occupies residues 1 to 21 (MHLSTSAAAILALSLAGPTMA). Cystine bridges form between C27–C81, C41–C73, C42–C60, and C82–C91.

Self-assembles to form functional amyloid fibrils called rodlets. Self-assembly into fibrillar rodlets occurs spontaneously at hydrophobic:hydrophilic interfaces and the rodlets further associate laterally to form amphipathic monolayers.

The protein localises to the secreted. It is found in the spore wall. In terms of biological role, aerial growth, conidiation, and dispersal of filamentous fungi in the environment rely upon a capability of their secreting small amphipathic proteins called hydrophobins (HPBs) with low sequence identity. Class I can self-assemble into an outermost layer of rodlet bundles on aerial cell surfaces, conferring cellular hydrophobicity that supports fungal growth, development and dispersal; whereas Class II form highly ordered films at water-air interfaces through intermolecular interactions but contribute nothing to the rodlet structure. DewD is an unclassified hydrophobin that contributes to the hydrophobicity of the spore surface. In Emericella nidulans (strain FGSC A4 / ATCC 38163 / CBS 112.46 / NRRL 194 / M139) (Aspergillus nidulans), this protein is Unclassified hydrophobin dewD.